Consider the following 1180-residue polypeptide: uncharacterized protein (1180 aa).

Disordered stretches follow at residues 229–280 (RQQG…DTSI), 431–465 (KQPP…PPLK), 484–575 (SRDT…PNMR), 730–758 (GRPL…ASRT), 810–986 (GKAE…ASWD), 1045–1109 (RLQE…ELEM), and 1125–1152 (ERLE…QKEE). A compositionally biased stretch (acidic residues) spans 269-279 (QEDETQAEDTS). The span at 431-443 (KQPPKEKAHRRGA) shows a compositional bias: basic residues. Residues 486–497 (DTLSPQGSSSLP) are compositionally biased toward polar residues. The span at 509-518 (SKARHTRVHS) shows a compositional bias: basic residues. 3 stretches are compositionally biased toward basic and acidic residues: residues 730–745 (GRPL…DPEP), 826–837 (SHERDLINEAKR), and 846–856 (TKGPKSEREGK). The segment covering 872–889 (KAKKKLEKKTRPQRKRTQ) has biased composition (basic residues). A compositionally biased stretch (polar residues) spans 937 to 959 (QESQVSLDGRSSPSQIATVTGNM). Basic and acidic residues-rich tracts occupy residues 960-986 (ESKE…ASWD), 1045-1106 (RLQE…RQEE), and 1127-1152 (LEYQ…QKEE). Residues 988–1171 (LRAERAEMRW…ATKQAQEQAR (184 aa)) adopt a coiled-coil conformation.

This is an uncharacterized protein from Homo sapiens (Human).